The sequence spans 44 residues: Photosystem I reaction center subunit IX (44 aa).

The chain crosses the membrane as a helical span at residues 7 to 27 (YLSVAPVLATLWFGSLAGLLI).

This sequence belongs to the PsaJ family.

The protein resides in the plastid. It is found in the chloroplast thylakoid membrane. Functionally, may help in the organization of the PsaE and PsaF subunits. The sequence is that of Photosystem I reaction center subunit IX from Illicium oligandrum (Star anise).